We begin with the raw amino-acid sequence, 839 residues long: Toll-like receptor 4 (839 aa).

A signal peptide spans 1–23 (MMSASRLAGTLIPAMAFLSCVRP). Residues 24–631 (ESWEPCVEVV…SLNITCQMNK (608 aa)) are Extracellular-facing. A disulfide bond links Cys29 and Cys40. The N-linked (GlcNAc...) asparagine glycan is linked to Asn35. LRR repeat units follow at residues 55-76 (STKNLDLSFNPLRHLGSYSFFS), 79-100 (ELQVLDLSRCEIQTIEDGAYQS), 103-124 (HLSTLILTGNPIQSLALGAFSG), 127-148 (SLQKLVAVETNLASLENFPIGH), and 151-172 (TLKELNVAHNLIQSFKLPEYFS). Asn173 carries N-linked (GlcNAc...) asparagine glycosylation. LRR repeat units lie at residues 176-199 (NLEHLDLSSNKIQSIYCTDLRVLH), 205-225 (NLSLDLSLNPMNFIQPGAFKE), and 227-247 (RLHKLTLRNNFDSLNVMKTCI). The N-linked (GlcNAc...) asparagine glycan is linked to Asn205. A disulfide bond links Cys281 and Cys306. Asn282 and Asn309 each carry an N-linked (GlcNAc...) asparagine glycan. 10 LRR repeats span residues 331 to 351 (GWQHLELVNCKFGQFPTLKLK), 352 to 373 (SLKRLTFTSNKGGNAFSEVDLP), 374 to 394 (SLEFLDLSRNGLSFKGCCSQS), 400 to 422 (SLKYLDLSFNGVITMSSNFLGLE), 423 to 444 (QLEHLDFQHSNLKQMSEFSVFL), 448 to 456 (NLIYLDISH), 472 to 495 (SLEVLKMAGNSFQENFLPDIFTEL), 497 to 518 (NLTFLDLSQCQLEQLSPTAFNS), 521 to 542 (SLQVLNMSHNNFFSLDTFPYKC), and 545 to 565 (SLQVLDYSLNHIMTSKKQELQ). An intrachain disulfide couples Cys390 to Cys391. 2 N-linked (GlcNAc...) asparagine glycosylation sites follow: Asn497 and Asn526. Asn575 carries N-linked (GlcNAc...) asparagine glycosylation. Residues 579-629 (NDFACTCEHQSFLQWIKDQRQLLVEVERMECATPSDKQGMPVLSLNITCQM) enclose the LRRCT domain. 2 disulfide bridges follow: Cys583-Cys609 and Cys585-Cys627. Asn624 and Asn630 each carry an N-linked (GlcNAc...) asparagine glycan. The chain crosses the membrane as a helical span at residues 632–652 (TIIGVSVLSVLVVSVVAVLVY). At 653–839 (KFYFHLMLLA…GCNWQEATSI (187 aa)) the chain is on the cytoplasmic side. A TIR domain is found at 672 to 815 (NIYDAFVIYS…IFWRRLRKAL (144 aa)).

Belongs to the Toll-like receptor family. As to quaternary structure, belongs to the lipopolysaccharide (LPS) receptor, a multi-protein complex containing at least CD14, LY96 and TLR4. Binding to bacterial LPS leads to homodimerization. Interacts with LY96 via the extracellular domain. Interacts with MYD88 and TIRAP via their respective TIR domains. Interacts with NOX4. Interacts with CNPY3 and HSP90B1; this interaction is required for proper folding in the endoplasmic reticulum. Interacts with MAP3K21; this interaction leads to negative regulation of TLR4 signaling. Interacts with CD36, following CD36 stimulation by oxLDL or amyloid-beta 42, and forms a heterodimer with TLR6. The trimeric complex is internalized and triggers inflammatory response. LYN kinase activity facilitates TLR4-TLR6 heterodimerization and signal initiation. Interacts with TICAM1 in response to LPS in a WDFY1-dependent manner. Interacts with WDFY1 in response to LPS. Interacts with SMPDL3B. Interacts with CEACAM1; upon lipopolysaccharide stimulation, forms a complex including TLR4 and the phosphorylated form of SYK and CEACAM1, which in turn, recruits PTPN6 that dephosphorylates SYK, reducing the production of reactive oxygen species (ROS) and lysosome disruption, which in turn, reduces the activity of the inflammasome. Interacts with RFTN1; the interaction occurs in response to lipopolysaccharide stimulation. Interacts with SCIMP; the interaction occurs in response to lipopolysaccharide stimulation and is enhanced by phosphorylation of SCIMP by LYN. This interaction facilitates the phosphorylation of TLR4 by LYN which elicits a selective cytokine response in macrophages. Interacts with TRAF3IP3. Interacts with TREM1; this interaction enhances TLR4-mediated inflammatory response. Interacts with ZG16B/PAUF. Interacts with CD82; this interaction inhibits TLR4-mediated signaling pathway. Post-translationally, phosphorylated on tyrosine residues by LYN after binding lipopolysaccharide. Ubiquitinated by RNF128 via 'Lys-28'-linked polyubiquitin chains, leading to proteasomal degradation.

The protein resides in the cell membrane. The protein localises to the early endosome. It localises to the cell projection. It is found in the ruffle. Functionally, transmembrane receptor that functions as a pattern recognition receptor recognizing pathogen- and damage-associated molecular patterns (PAMPs and DAMPs) to induce innate immune responses via downstream signaling pathways. At the plasma membrane, cooperates with LY96 to mediate the innate immune response to bacterial lipopolysaccharide (LPS). Also involved in LPS-independent inflammatory responses triggered by free fatty acids, such as palmitate, and Ni(2+). Mechanistically, acts via MYD88, TIRAP and TRAF6, leading to NF-kappa-B activation, cytokine secretion and the inflammatory response. Alternatively, CD14-mediated TLR4 internalization via endocytosis is associated with the initiation of a MYD88-independent signaling via the TICAM1-TBK1-IRF3 axis leading to type I interferon production. In addition to the secretion of proinflammatory cytokines, initiates the activation of NLRP3 inflammasome and formation of a positive feedback loop between autophagy and NF-kappa-B signaling cascade. In complex with TLR6, promotes inflammation in monocytes/macrophages by associating with TLR6 and the receptor CD86. Upon ligand binding, such as oxLDL or amyloid-beta 42, the TLR4:TLR6 complex is internalized and triggers inflammatory response, leading to NF-kappa-B-dependent production of CXCL1, CXCL2 and CCL9 cytokines, via MYD88 signaling pathway, and CCL5 cytokine, via TICAM1 signaling pathway. In myeloid dendritic cells, vesicular stomatitis virus glycoprotein G but not LPS promotes the activation of IRF7, leading to type I IFN production in a CD14-dependent manner. This chain is Toll-like receptor 4 (TLR4), found in Pan paniscus (Pygmy chimpanzee).